The sequence spans 484 residues: Glutamate--tRNA ligase (484 aa).

The 'HIGH' region signature appears at 11–21; it reads PSPTGYLHIGN. The short motif at 252 to 256 is the 'KMSKS' region element; the sequence is KLSKR. Residue Lys-255 participates in ATP binding.

Belongs to the class-I aminoacyl-tRNA synthetase family. Glutamate--tRNA ligase type 1 subfamily. Monomer.

The protein resides in the cytoplasm. It catalyses the reaction tRNA(Glu) + L-glutamate + ATP = L-glutamyl-tRNA(Glu) + AMP + diphosphate. Its function is as follows. Catalyzes the attachment of glutamate to tRNA(Glu) in a two-step reaction: glutamate is first activated by ATP to form Glu-AMP and then transferred to the acceptor end of tRNA(Glu). The protein is Glutamate--tRNA ligase of Staphylococcus aureus (strain Mu3 / ATCC 700698).